The primary structure comprises 67 residues: Protein AaeX (67 aa).

Helical transmembrane passes span 8-28 and 47-67; these read VLFG…LPLF and PALF…WLFI.

The protein belongs to the AaeX family.

It localises to the cell membrane. The chain is Protein AaeX from Edwardsiella piscicida.